The sequence spans 226 residues: MLCCMRRTKQVEKNDEDQKIEQDGVKPEDKAHKAATKIQASFRGHITRKKLKDEKKGDAPAAEAEAKEKDDAPVADGVEKKEGDGSATTDAAPATSPKAEEPSKAGDAPSEEKKGEGDAAPSEEKAGSAETESAAKATTDNSPSSKAEDGPAKEEPKQADVPAAVTDAAATTPAAEDAAKAAQPPTETAESSQAEEEKEAVDEAKPKESARQDEGKEDPEADQEHA.

The tract at residues 1–226 (MLCCMRRTKQ…EDPEADQEHA (226 aa)) is disordered. 2 S-palmitoyl cysteine lipidation sites follow: Cys-3 and Cys-4. Residues 9 to 32 (KQVEKNDEDQKIEQDGVKPEDKAH) show a composition bias toward basic and acidic residues. The IQ domain maps to 31–60 (AHKAATKIQASFRGHITRKKLKDEKKGDAP). Phosphoserine; by PHK and PKC is present on Ser-41. A compositionally biased stretch (basic and acidic residues) spans 51–84 (LKDEKKGDAPAAEAEAKEKDDAPVADGVEKKEGD). Positions 85–97 (GSATTDAAPATSP) are enriched in low complexity. A phosphoserine mark is found at Ser-86 and Ser-96. Residues 98–127 (KAEEPSKAGDAPSEEKKGEGDAAPSEEKAG) are compositionally biased toward basic and acidic residues. The span at 128–139 (SAETESAAKATT) shows a compositional bias: low complexity. 3 positions are modified to phosphoserine: Ser-142, Ser-144, and Ser-145. The span at 146–158 (KAEDGPAKEEPKQ) shows a compositional bias: basic and acidic residues. Residues 159–192 (ADVPAAVTDAAATTPAAEDAAKAAQPPTETAESS) are compositionally biased toward low complexity. Thr-172 carries the phosphothreonine modification. A phosphoserine mark is found at Ser-191 and Ser-192. Residues 201-214 (VDEAKPKESARQDE) show a composition bias toward basic and acidic residues. Acidic residues predominate over residues 215 to 226 (GKEDPEADQEHA).

This sequence belongs to the neuromodulin family. In terms of assembly, identified in a complex containing FGFR4, NCAM1, CDH2, PLCG1, FRS2, SRC, SHC1, GAP43 and CTTN. Interacts (via IQ domain) with calmodulin. Binds calmodulin with a greater affinity in the absence of Ca(2+) than in its presence. Phosphorylated. Phosphorylation of this protein by a protein kinase C is specifically correlated with certain forms of synaptic plasticity. Post-translationally, palmitoylated by ZDHHC3. Palmitoylation is regulated by ARF6 and is essential for plasma membrane association and axonal and dendritic filopodia induction. Deacylated by LYPLA2. Expressed in hippocampal neurons, with highest levels of expression in the CA4 and CA3 neurons and lower levels in CA1 neurons. Expressed in the dorsal root ganglion.

Its subcellular location is the cell membrane. The protein localises to the cell projection. It localises to the growth cone. It is found in the growth cone membrane. The protein resides in the synapse. Its subcellular location is the filopodium membrane. The protein localises to the perikaryon. It localises to the dendrite. It is found in the axon. The protein resides in the cytoplasm. This protein is associated with nerve growth. It is a major component of the motile 'growth cones' that form the tips of elongating axons. Plays a role in axonal and dendritic filopodia induction. In Rattus norvegicus (Rat), this protein is Neuromodulin (Gap43).